We begin with the raw amino-acid sequence, 495 residues long: Flagellin (495 aa).

Belongs to the bacterial flagellin family.

The protein localises to the secreted. Its subcellular location is the bacterial flagellum. Flagellin is the subunit protein which polymerizes to form the filaments of bacterial flagella. This Salmonella typhimurium (strain LT2 / SGSC1412 / ATCC 700720) protein is Flagellin (fliC).